The sequence spans 359 residues: POU domain, class 5, transcription factor 1B (359 aa).

Disordered regions lie at residues 1–53 and 87–116; these read MAGH…GVGP and QGGL…EPCT. Ser-111 is modified (phosphoserine). A POU-specific domain is found at 138–212; that stretch reads DIKALQKELE…LLQKWVEEAD (75 aa). The segment at residues 229–288 is a DNA-binding region (homeobox); it reads ARKRKRTSIENRVRGNLENLFLQCPKPTLQISHIAQQLGLEKDVVRVWFCNRRQKGKRSS. The residue at position 235 (Thr-235) is a Phosphothreonine. Ser-236, Ser-288, and Ser-289 each carry phosphoserine. The tract at residues 287 to 322 is disordered; the sequence is SSSDYAQREDFEAAGSPFSGGPVSFPPAPGPHFGTP. The segment covering 299–309 has biased composition (low complexity); that stretch reads AAGSPFSGGPV. Ser-354 is subject to Phosphoserine.

Belongs to the POU transcription factor family. Class-5 subfamily. As to expression, detected in epithelial cells of the prostate (at protein level). Detected at the mRNA level in several cancer tissues (breast, uterine cervix, lung, thyroid gland, esophagus, colon, urinary bladder, and glioma).

It is found in the nucleus. The protein resides in the cytoplasm. In terms of biological role, shows weak transcriptional activator activity. This Homo sapiens (Human) protein is POU domain, class 5, transcription factor 1B (POU5F1B).